The primary structure comprises 320 residues: Acetyl-coenzyme A carboxylase carboxyl transferase subunit alpha (320 aa).

The CoA carboxyltransferase C-terminal domain maps to 34–288; that stretch reads RLEEALEAAR…GEALERVLAG (255 aa).

It belongs to the AccA family. Acetyl-CoA carboxylase is a heterohexamer composed of biotin carboxyl carrier protein (AccB), biotin carboxylase (AccC) and two subunits each of ACCase subunit alpha (AccA) and ACCase subunit beta (AccD).

Its subcellular location is the cytoplasm. It catalyses the reaction N(6)-carboxybiotinyl-L-lysyl-[protein] + acetyl-CoA = N(6)-biotinyl-L-lysyl-[protein] + malonyl-CoA. It functions in the pathway lipid metabolism; malonyl-CoA biosynthesis; malonyl-CoA from acetyl-CoA: step 1/1. Functionally, component of the acetyl coenzyme A carboxylase (ACC) complex. First, biotin carboxylase catalyzes the carboxylation of biotin on its carrier protein (BCCP) and then the CO(2) group is transferred by the carboxyltransferase to acetyl-CoA to form malonyl-CoA. The chain is Acetyl-coenzyme A carboxylase carboxyl transferase subunit alpha from Rubrobacter xylanophilus (strain DSM 9941 / JCM 11954 / NBRC 16129 / PRD-1).